Reading from the N-terminus, the 294-residue chain is 4-diphosphocytidyl-2-C-methyl-D-erythritol kinase (294 aa).

Residue Lys11 is part of the active site. ATP is bound at residue 93–103 (PFGAGLGGGSS). The active site involves Asp135.

Belongs to the GHMP kinase family. IspE subfamily.

The enzyme catalyses 4-CDP-2-C-methyl-D-erythritol + ATP = 4-CDP-2-C-methyl-D-erythritol 2-phosphate + ADP + H(+). It participates in isoprenoid biosynthesis; isopentenyl diphosphate biosynthesis via DXP pathway; isopentenyl diphosphate from 1-deoxy-D-xylulose 5-phosphate: step 3/6. Catalyzes the phosphorylation of the position 2 hydroxy group of 4-diphosphocytidyl-2C-methyl-D-erythritol. This chain is 4-diphosphocytidyl-2-C-methyl-D-erythritol kinase, found in Chlorobium phaeobacteroides (strain DSM 266 / SMG 266 / 2430).